The primary structure comprises 145 residues: Large ribosomal subunit protein uL15 (145 aa).

The tract at residues 1-57 (MKLNDLSPAPGSRREKHRPGRGIGSGLGKTGGRGHKGQTSRSGGTIAPGFEGGQQPL) is disordered. The span at 21 to 31 (RGIGSGLGKTG) shows a compositional bias: gly residues.

The protein belongs to the universal ribosomal protein uL15 family. As to quaternary structure, part of the 50S ribosomal subunit.

In terms of biological role, binds to the 23S rRNA. In Pseudomonas fluorescens (strain SBW25), this protein is Large ribosomal subunit protein uL15.